A 327-amino-acid polypeptide reads, in one-letter code: T-cell surface glycoprotein CD1a (327 aa).

An N-terminal signal peptide occupies residues 1–16 (MLFLLLPLLAVLPGDG). Topologically, residues 17–300 (NADGLKEPLS…VLYWEHHSSV (284 aa)) are extracellular. N-linked (GlcNAc...) asparagine glycans are attached at residues asparagine 37, asparagine 60, and asparagine 74. 90–94 (RTIRS) contributes to the a D-galactosylceramide binding site. 2 cysteine pairs are disulfide-bonded: cysteine 119/cysteine 183 and cysteine 223/cysteine 278. A glycan (N-linked (GlcNAc...) asparagine) is linked at asparagine 145. The a D-galactosylceramide site is built by glutamate 171 and threonine 175. Residues 184–291 (PRFILGLLDA…HSSLEGQDIV (108 aa)) enclose the Ig-like domain. A helical transmembrane segment spans residues 301–321 (GFIILAVIVPLLLLIGLALWF). Over 322–327 (RKRCFC) the chain is Cytoplasmic.

As to quaternary structure, heterodimer with B2M (beta-2-microglobulin). Interacts with CD74. In terms of tissue distribution, expressed on cortical thymocytes, epidermal Langerhans cells, dendritic cells, on certain T-cell leukemias, and in various other tissues.

The protein resides in the cell membrane. It localises to the membrane raft. Its subcellular location is the endosome membrane. Antigen-presenting protein that binds self and non-self lipid and glycolipid antigens and presents them to T-cell receptors on natural killer T-cells. This is T-cell surface glycoprotein CD1a (CD1A) from Homo sapiens (Human).